The following is a 307-amino-acid chain: tRNA N(3)-methylcytidine methyltransferase trm140 (307 aa).

The S-adenosyl-L-methionine site is built by W83, Y87, G125, D150, D176, L177, and I197.

The protein belongs to the methyltransferase superfamily. METL family.

It carries out the reaction cytidine(32) in tRNA(Thr) + S-adenosyl-L-methionine = N(3)-methylcytidine(32) in tRNA(Thr) + S-adenosyl-L-homocysteine + H(+). In terms of biological role, S-adenosyl-L-methionine-dependent methyltransferase that mediates N(3)-methylcytidine modification of residue 32 of the tRNA anticodon loop of tRNA(Thr). Does not catalyze N(3)-methylcytidine modification of tRNA(Ser). This chain is tRNA N(3)-methylcytidine methyltransferase trm140, found in Schizosaccharomyces pombe (strain 972 / ATCC 24843) (Fission yeast).